Here is a 671-residue protein sequence, read N- to C-terminus: MDESLTPNPKQKPASTTTRIQAPTSPFFLGSNDDRLEREQARAARAAASRRRSVIFARGSQPETESDPCFDKQQILELFQNCIKLASENKINQKNTWELNLIDHLCEIIKVEDENNTETNFQKASCTLEAGVKIYSMRVDSVHSEAYKVLGGITRAGHDDGGDHEDAAGAVENATNQKKQPEKKISPLSTLEPSFDALNVKKFDVAFAVDPLYHQTSAQFDEGGAKGLLLNNLGVYGGCQVLFDSQEIPGKLVSSANKHDKSETIDLSFVKECVEQMVLNMRKKDEIVPSLRAIINQFDEENQRPSDTFSCGQQTTESFDISHGNDASYADDDEGYENFGTSFDYEGQSGDVDENFGPNEAEPIYSNFHEEVEPASLQDMDSDDRLENVDDYLFLSLGISSKQNSWAGPDHWKYRKTKGPDVQPASEIKSSPPAKKTRKKKQAEPELDFAKALEEEMPDIFAPPKNPKTLLLPASRTPCQTKLPEDCHYQPENLIKLFLLPNVMCLGRRRRKNSGETSRQQPDDYEHGESWGNDNVYDDDDGPFDDNENDQSDAEDTNTLISQPRQVNKIDVQYDKASKQVDVQVLKETLWECLQESHQPPIQDEEHQQEPPESRSFKVLLASFPDDCQAAERTQDISPHLCFICLLHLANEHNLSLIGSQNLDDLTIHLA.

The segment covering 1–24 has biased composition (polar residues); it reads MDESLTPNPKQKPASTTTRIQAPT. 3 disordered regions span residues 1–33, 404–444, and 510–564; these read MDES…GSND, NSWA…KQAE, and RRKN…ISQP. The short motif at 406 to 415 is the Kleisin-gamma middle domain (GM domain) involved in chromosome-binding element; that stretch reads WAGPDHWKYR. The segment covering 536-556 has biased composition (acidic residues); that stretch reads VYDDDDGPFDDNENDQSDAED.

Belongs to the CND2 (condensin subunit 2) family. As to quaternary structure, component of the condensin complex. Mostly expressed in flower buds and flowers, and, to a lower extent, in roots, stems, leaves and seedlings.

The protein resides in the cytoplasm. Its subcellular location is the chromosome. Its function is as follows. Regulatory subunit of the condensin complex, a complex required for conversion of interphase chromatin into mitotic-like condense chromosomes. The condensin complex probably introduces positive supercoils into relaxed DNA in the presence of type I topoisomerases and converts nicked DNA into positive knotted forms in the presence of type II topoisomerases. Essential protein. The sequence is that of Condensin complex subunit 2 (CAPH) from Arabidopsis thaliana (Mouse-ear cress).